Consider the following 242-residue polypeptide: ATP-dependent dethiobiotin synthetase BioD (242 aa).

15-20 (DVGKTV) contributes to the ATP binding site. Mg(2+) is bound at residue Thr19. Lys40 is a catalytic residue. Substrate is bound at residue Ser44. Residue Glu117 coordinates Mg(2+). ATP is bound by residues 117–120 (EGAG), 178–179 (NQ), and 208–210 (PYS).

It belongs to the dethiobiotin synthetase family. As to quaternary structure, homodimer. Mg(2+) serves as cofactor.

The protein localises to the cytoplasm. It catalyses the reaction (7R,8S)-7,8-diammoniononanoate + CO2 + ATP = (4R,5S)-dethiobiotin + ADP + phosphate + 3 H(+). The protein operates within cofactor biosynthesis; biotin biosynthesis; biotin from 7,8-diaminononanoate: step 1/2. Catalyzes a mechanistically unusual reaction, the ATP-dependent insertion of CO2 between the N7 and N8 nitrogen atoms of 7,8-diaminopelargonic acid (DAPA, also called 7,8-diammoniononanoate) to form a ureido ring. This chain is ATP-dependent dethiobiotin synthetase BioD, found in Halalkalibacterium halodurans (strain ATCC BAA-125 / DSM 18197 / FERM 7344 / JCM 9153 / C-125) (Bacillus halodurans).